The following is a 187-amino-acid chain: Ribosome maturation factor RimM (187 aa).

The 74-residue stretch at 96–169 (EDEFFYADLE…KLVIDPTAAG (74 aa)) folds into the PRC barrel domain.

The protein belongs to the RimM family. As to quaternary structure, binds ribosomal protein uS19.

It localises to the cytoplasm. In terms of biological role, an accessory protein needed during the final step in the assembly of 30S ribosomal subunit, possibly for assembly of the head region. Essential for efficient processing of 16S rRNA. May be needed both before and after RbfA during the maturation of 16S rRNA. It has affinity for free ribosomal 30S subunits but not for 70S ribosomes. In Sinorhizobium medicae (strain WSM419) (Ensifer medicae), this protein is Ribosome maturation factor RimM.